Consider the following 72-residue polypeptide: Omega-conotoxin-like SVIA mutant 1 (72 aa).

Positions 1-22 (MKLTCVVIVAVLLLTACQLITA) are cleaved as a signal peptide. Residues 23–48 (EDSRGAQKHRTLRSTARRSKSELTTR) constitute a propeptide that is removed on maturation. 3 disulfides stabilise this stretch: Cys49–Cys63, Cys56–Cys66, and Cys62–Cys71. Position 55 is a 4-hydroxyproline (Pro55).

Belongs to the conotoxin O1 superfamily. Expressed by the venom duct.

The protein resides in the secreted. Omega-conotoxins act at presynaptic membranes, they bind and block voltage-gated calcium channels (Cav). This Conus striatus (Striated cone) protein is Omega-conotoxin-like SVIA mutant 1.